A 390-amino-acid chain; its full sequence is 3-ketoacyl-CoA thiolase (390 aa).

Cysteine 95 acts as the Acyl-thioester intermediate in catalysis. Catalysis depends on proton acceptor residues histidine 346 and cysteine 376.

This sequence belongs to the thiolase-like superfamily. Thiolase family. In terms of assembly, heterotetramer of two alpha chains (FadB) and two beta chains (FadA).

It is found in the cytoplasm. The catalysed reaction is an acyl-CoA + acetyl-CoA = a 3-oxoacyl-CoA + CoA. It functions in the pathway lipid metabolism; fatty acid beta-oxidation. Its function is as follows. Catalyzes the final step of fatty acid oxidation in which acetyl-CoA is released and the CoA ester of a fatty acid two carbons shorter is formed. The protein is 3-ketoacyl-CoA thiolase of Acinetobacter baylyi (strain ATCC 33305 / BD413 / ADP1).